The chain runs to 610 residues: Glutamine--fructose-6-phosphate aminotransferase [isomerizing] (610 aa).

Cys2 serves as the catalytic Nucleophile; for GATase activity. Positions 2–217 constitute a Glutamine amidotransferase type-2 domain; it reads CGIVGYVGQK…DKEFVVLTND (216 aa). SIS domains follow at residues 284–424 and 453–600; these read ITKE…LKGS and LIKE…VDKP. Lys605 functions as the For Fru-6P isomerization activity in the catalytic mechanism.

Homodimer.

It is found in the cytoplasm. The catalysed reaction is D-fructose 6-phosphate + L-glutamine = D-glucosamine 6-phosphate + L-glutamate. In terms of biological role, catalyzes the first step in hexosamine metabolism, converting fructose-6P into glucosamine-6P using glutamine as a nitrogen source. The chain is Glutamine--fructose-6-phosphate aminotransferase [isomerizing] from Clostridium perfringens (strain 13 / Type A).